Reading from the N-terminus, the 340-residue chain is Annexin A2-B (340 aa).

A P10 binding site region spans residues 2–25 (ALIHEILGKLSLEGNQSSSRQSKL). The residue at position 27 (serine 27) is a Phosphoserine; by PKC. Annexin repeat units follow at residues 34-105 (FDAE…GLIK), 106-177 (TRPQ…ALAK), 190-262 (EKID…NLVQ), and 266-337 (NKPL…NLCG).

Belongs to the annexin family. As to quaternary structure, tetramer of 2 light chains (p10 proteins) and 2 heavy chains (p36 proteins). In terms of tissue distribution, adult brain, heart, striated muscle, liver, kidney, and very high levels in skin.

It localises to the secreted. Its subcellular location is the extracellular space. It is found in the extracellular matrix. The protein resides in the basement membrane. Functionally, calcium-regulated membrane-binding protein whose affinity for calcium is greatly enhanced by anionic phospholipids. It binds two calcium ions with high affinity. The sequence is that of Annexin A2-B (anxa2-b) from Xenopus laevis (African clawed frog).